The sequence spans 102 residues: Peptide chaperone MftB (102 aa).

The protein belongs to the peptide chaperone MftB family.

Peptide chaperone involved in the biosynthesis of the enzyme cofactor mycofactocin (MFT). Binds MftA and MftC with high affinity, and is essential for MftC activity on MftA, likely via the formation of a ternary complex. Is required for the in vivo ethanol assimilation in M.smegmatis. This is Peptide chaperone MftB from Mycolicibacterium smegmatis (strain ATCC 700084 / mc(2)155) (Mycobacterium smegmatis).